The primary structure comprises 207 residues: Large ribosomal subunit protein uL4 (207 aa).

The disordered stretch occupies residues lysine 44–glycine 76. The segment covering glycine 60–glycine 76 has biased composition (basic residues).

The protein belongs to the universal ribosomal protein uL4 family. In terms of assembly, part of the 50S ribosomal subunit.

In terms of biological role, one of the primary rRNA binding proteins, this protein initially binds near the 5'-end of the 23S rRNA. It is important during the early stages of 50S assembly. It makes multiple contacts with different domains of the 23S rRNA in the assembled 50S subunit and ribosome. Forms part of the polypeptide exit tunnel. The protein is Large ribosomal subunit protein uL4 of Natranaerobius thermophilus (strain ATCC BAA-1301 / DSM 18059 / JW/NM-WN-LF).